The sequence spans 100 residues: Urease subunit gamma (100 aa).

It belongs to the urease gamma subunit family. In terms of assembly, heterotrimer of UreA (gamma), UreB (beta) and UreC (alpha) subunits. Three heterotrimers associate to form the active enzyme.

It localises to the cytoplasm. It catalyses the reaction urea + 2 H2O + H(+) = hydrogencarbonate + 2 NH4(+). The protein operates within nitrogen metabolism; urea degradation; CO(2) and NH(3) from urea (urease route): step 1/1. The protein is Urease subunit gamma of Kocuria rhizophila (strain ATCC 9341 / DSM 348 / NBRC 103217 / DC2201).